The sequence spans 560 residues: Formate--tetrahydrofolate ligase (560 aa).

Residue 69–76 (TPAGEGKS) participates in ATP binding.

This sequence belongs to the formate--tetrahydrofolate ligase family.

It catalyses the reaction (6S)-5,6,7,8-tetrahydrofolate + formate + ATP = (6R)-10-formyltetrahydrofolate + ADP + phosphate. Its pathway is one-carbon metabolism; tetrahydrofolate interconversion. This Listeria welshimeri serovar 6b (strain ATCC 35897 / DSM 20650 / CCUG 15529 / CIP 8149 / NCTC 11857 / SLCC 5334 / V8) protein is Formate--tetrahydrofolate ligase.